A 985-amino-acid chain; its full sequence is MPESLIAGIPVHFPFEPYPVQRAYMEKVIQCLRDGTNGVLESPTGTGKTLSLLCSSLAWIRTRQSEHQQQMVKIEKADFSGLAGGATGGELSDLGKTMGRANNWGVPKVIYASRTHSQLTQAMRELKRTAYANMRSVVLGSRDQLCIHPEVMREQGNSNKTNMCKLRVHSKTCTFQMRVESRKDHPDLRGPSIMDIEDLVKVGQRLKICPYFASRELVPQADITFMPYNYLLDPKARKANKIELGNTIVILDEAHNIEKICEESASVQIKSSDVAMAIEDVTHIMQVFASGESQDMAGDEPKDFTLDDLTLLKEMLLELEKAIDAVVVDNAAEGTTFPASLMYELLGKANFTYGNVATIVSLLDKLVQYLLVASQQMSIRKGGTFTMLSDLLTIVFANKQDVMSKVYASFKVHVQMEESKQGHGKQQGAKQQGGWLGKGTIAAASGTSKVAKIINFWCFNPGFGMEQLLNTQVRSVILTSGTLAPLKPLIAELAIPVAQHLENPHIVDQSQVYVKIIGTGPDRQQLISNYANRDNPKYISSLGQTILNVSRIVPDGLLVFFPSYPMLNKCVDAWQASGLWADISCKKPIFLEPRSKDQFTSTMEEFYQAIRDSKGAVFMAVCRGKVSEGLDFADRNGRAVIITGLPFPPLKDPKVILKRRYLEANRTRENQLLSGQEWYNLDATRAVNQAIGRVIRHRNDYGAILLCDSRFKDASQVQQLSKWIRGHLGDRPQCSPFGPIVRELRQFFKNAEANMKLPDERETDAPLETVCKTEDEPLAAIPKLKREPGSNATFKSANESAIKVEMANSIKTWTPADYASAAGRKLGGAAPSAMDFMSRLDSNVSSIDFNCCTDSKSGSSDLVKIHKRERSSPTLPESSSQVSKKRYKLVENIKVEPSSSQAKAAPEERADFLRALRSLVTQDQFRRFGKALLEYKNGTYESFQDLMAILLDVLSAPKVRYMLVGMRKYLKNEHKDEFDRRVGSL.

The Helicase ATP-binding domain occupies 7–303 (AGIPVHFPFE…QDMAGDEPKD (297 aa)). ATP is bound at residue 42–49 (SPTGTGKT). Cysteine 146, cysteine 164, cysteine 173, and cysteine 209 together coordinate [4Fe-4S] cluster. The short motif at 252-255 (DEAH) is the DEAH box element. At threonine 874 the chain carries Phosphothreonine.

It belongs to the helicase family. RAD3/XPD subfamily.

The protein resides in the nucleus. It catalyses the reaction ATP + H2O = ADP + phosphate + H(+). In terms of biological role, a probable ATP-dependent DNA helicase implicated in DNA repair and the maintenance of genomic stability. Acts as an anti-recombinase to counteract toxic recombination and limit crossover during meiosis. Regulates meiotic recombination and crossover homeostasis by physically dissociating strand invasion events and thereby promotes noncrossover repair by meiotic synthesis dependent strand annealing (SDSA) as well as disassembly of D loop recombination intermediates. The protein is Regulator of telomere elongation helicase 1 homolog of Drosophila erecta (Fruit fly).